Reading from the N-terminus, the 73-residue chain is uncharacterized protein (73 aa).

This is an uncharacterized protein from Human cytomegalovirus (strain AD169) (HHV-5).